The sequence spans 305 residues: Ribonuclease BN (305 aa).

Histidine 64, histidine 66, aspartate 68, histidine 69, histidine 141, aspartate 212, and histidine 270 together coordinate Zn(2+). The active-site Proton acceptor is the aspartate 68.

This sequence belongs to the RNase Z family. RNase BN subfamily. As to quaternary structure, homodimer. Requires Zn(2+) as cofactor.

Functionally, zinc phosphodiesterase, which has both exoribonuclease and endoribonuclease activities. The polypeptide is Ribonuclease BN (Escherichia coli O45:K1 (strain S88 / ExPEC)).